We begin with the raw amino-acid sequence, 192 residues long: Thymidine kinase (192 aa).

ATP contacts are provided by residues 9–16 (SAMNAGKS) and 87–90 (DECQ). Catalysis depends on glutamate 88, which acts as the Proton acceptor. Residues cysteine 145, cysteine 147, cysteine 182, and histidine 185 each coordinate Zn(2+).

It belongs to the thymidine kinase family. As to quaternary structure, homotetramer.

Its subcellular location is the cytoplasm. The catalysed reaction is thymidine + ATP = dTMP + ADP + H(+). The chain is Thymidine kinase from Vibrio vulnificus (strain CMCP6).